The following is a 199-amino-acid chain: SCO2-like protein RBE_0029 (199 aa).

It belongs to the SCO1/2 family.

This chain is SCO2-like protein RBE_0029, found in Rickettsia bellii (strain RML369-C).